The sequence spans 239 residues: Transmembrane emp24 domain-containing protein 6 (239 aa).

Residues 1-21 form the signal peptide; sequence MFPLLLVAELVVLSLVTSVKS. Residues 22–200 lie on the Lumenal side of the membrane; the sequence is QETDPLHGSK…FFLLQSNYTY (179 aa). Positions 53-138 constitute a GOLD domain; sequence IECFWQFADQ…SIQVYLNFGV (86 aa). Asn156 and Asn197 each carry an N-linked (GlcNAc...) asparagine glycan. The helical transmembrane segment at 201 to 223 threads the bilayer; it reads VNWWSTAQSLAIVLSGALQLYFL. The Cytoplasmic segment spans residues 224–239; the sequence is KRLFTASTTDTKKPRC.

The protein belongs to the EMP24/GP25L family.

Its subcellular location is the endoplasmic reticulum membrane. The polypeptide is Transmembrane emp24 domain-containing protein 6 (Tmed6) (Mus musculus (Mouse)).